The chain runs to 184 residues: UPF0149 protein PputGB1_5261 (184 aa).

It belongs to the UPF0149 family.

The chain is UPF0149 protein PputGB1_5261 from Pseudomonas putida (strain GB-1).